A 414-amino-acid chain; its full sequence is tRNA(Ile)-lysidine synthase (414 aa).

Residue S13–S18 participates in ATP binding.

Belongs to the tRNA(Ile)-lysidine synthase family.

It localises to the cytoplasm. The catalysed reaction is cytidine(34) in tRNA(Ile2) + L-lysine + ATP = lysidine(34) in tRNA(Ile2) + AMP + diphosphate + H(+). Its function is as follows. Ligates lysine onto the cytidine present at position 34 of the AUA codon-specific tRNA(Ile) that contains the anticodon CAU, in an ATP-dependent manner. Cytidine is converted to lysidine, thus changing the amino acid specificity of the tRNA from methionine to isoleucine. The protein is tRNA(Ile)-lysidine synthase of Thermotoga sp. (strain RQ2).